Reading from the N-terminus, the 81-residue chain is Protein PYP1 (81 aa).

A chloroplast-targeting transit peptide spans 1–25 (MAFVSGFTGMPVTARVSKAVCRTRM). The disordered stretch occupies residues 27–57 (LEGGKSSGGGEATRDPEPTAVDPNDPKGKQQ).

The protein localises to the plastid. The protein resides in the chloroplast. This is Protein PYP1 from Pyropia yezoensis (Susabi-nori).